Here is a 98-residue protein sequence, read N- to C-terminus: Hainantoxin-XVII.2 (98 aa).

The first 40 residues, 1-40 (MTTVGVSLFRRSPEKITMKIAAFLGLSFLLIASYVLICEA), serve as a signal peptide directing secretion. A propeptide spanning residues 41–64 (QHPGFQELLILEENMRDPENSKER) is cleaved from the precursor. 3 disulfides stabilise this stretch: Cys66/Cys81, Cys73/Cys85, and Cys80/Cys95.

Belongs to the hainantoxin family. 17 subfamily. As to expression, expressed by the venom gland.

The protein resides in the secreted. Its function is as follows. Putative ion channel inhibitor. This is Hainantoxin-XVII.2 from Cyriopagopus hainanus (Chinese bird spider).